Here is a 119-residue protein sequence, read N- to C-terminus: Membrane-anchored ubiquitin-fold protein 1 (119 aa).

The Ubiquitin-like domain occupies 9–75 (FEIKFRLPDG…LENNKTLSEC (67 aa)). Cys-116 is modified (cysteine methyl ester). The S-farnesyl cysteine moiety is linked to residue Cys-116. The propeptide at 117-119 (SIM) is removed in mature form.

The protein resides in the cell membrane. Its function is as follows. May serve as docking site to facilitate the association of other proteins to the plasma membrane. This Oryza sativa subsp. japonica (Rice) protein is Membrane-anchored ubiquitin-fold protein 1 (MUB1).